Here is a 148-residue protein sequence, read N- to C-terminus: 3-hydroxyacyl-[acyl-carrier-protein] dehydratase FabZ (148 aa).

Histidine 47 is a catalytic residue.

It belongs to the thioester dehydratase family. FabZ subfamily.

It is found in the cytoplasm. It carries out the reaction a (3R)-hydroxyacyl-[ACP] = a (2E)-enoyl-[ACP] + H2O. Involved in unsaturated fatty acids biosynthesis. Catalyzes the dehydration of short chain beta-hydroxyacyl-ACPs and long chain saturated and unsaturated beta-hydroxyacyl-ACPs. The protein is 3-hydroxyacyl-[acyl-carrier-protein] dehydratase FabZ of Hydrogenobaculum sp. (strain Y04AAS1).